The chain runs to 203 residues: Translation machinery-associated protein 16 (203 aa).

The segment at 1–39 is disordered; sequence MPKAPKGKSAGREKKVIHPYSRKAAQITREAHKQEKKEK. Serine 9 bears the ADP-ribosylserine mark. Basic and acidic residues predominate over residues 29–39; it reads REAHKQEKKEK.

It belongs to the TMA16 family. Associates with pre-60S ribosomal particles.

The protein localises to the nucleus. Involved in the biogenesis of the 60S ribosomal subunit in the nucleus. This chain is Translation machinery-associated protein 16 (TMA16), found in Homo sapiens (Human).